The primary structure comprises 100 residues: Cell division protein FtsB (100 aa).

At 1 to 3 (MKQ) the chain is on the cytoplasmic side. The chain crosses the membrane as a helical span at residues 4 to 21 (LIFLLICLLSLLQYRLWL). Residues 22–100 (GDNNLSEYVL…ELRERNPFNR (79 aa)) are Periplasmic-facing. Residues 49-73 (RNQILKEEIIDLKRGTEAIEERARN) are a coiled coil.

The protein belongs to the FtsB family. In terms of assembly, part of a complex composed of FtsB, FtsL and FtsQ.

Its subcellular location is the cell inner membrane. Its function is as follows. Essential cell division protein. May link together the upstream cell division proteins, which are predominantly cytoplasmic, with the downstream cell division proteins, which are predominantly periplasmic. This chain is Cell division protein FtsB, found in Shewanella frigidimarina (strain NCIMB 400).